A 518-amino-acid chain; its full sequence is 2-isopropylmalate synthase (518 aa).

The Pyruvate carboxyltransferase domain maps to 5-267 (VIIFDTTLRD…STKIKHKEIY (263 aa)). Residues D14, H202, H204, and N238 each contribute to the Mn(2+) site. A regulatory domain region spans residues 392–518 (SLSFFSVQSI…KLKKLKKINN (127 aa)).

Belongs to the alpha-IPM synthase/homocitrate synthase family. LeuA type 1 subfamily. Homodimer. Requires Mn(2+) as cofactor.

The protein resides in the cytoplasm. It catalyses the reaction 3-methyl-2-oxobutanoate + acetyl-CoA + H2O = (2S)-2-isopropylmalate + CoA + H(+). It functions in the pathway amino-acid biosynthesis; L-leucine biosynthesis; L-leucine from 3-methyl-2-oxobutanoate: step 1/4. Catalyzes the condensation of the acetyl group of acetyl-CoA with 3-methyl-2-oxobutanoate (2-ketoisovalerate) to form 3-carboxy-3-hydroxy-4-methylpentanoate (2-isopropylmalate). In Buchnera aphidicola subsp. Rhopalosiphum padi, this protein is 2-isopropylmalate synthase.